We begin with the raw amino-acid sequence, 503 residues long: Nuclear respiratory factor 1 (503 aa).

Residues 1 to 78 are dimerization; it reads MEEHGVTQTE…AHLAAAGPVG (78 aa). A disordered region spans residues 36 to 57; the sequence is SMLSADEDSPSSPEDTSYDDSD. Residues S39, S44, S46, S47, and S52 each carry the phosphoserine; by CK2 modification. Positions 88 to 116 match the Nuclear localization signal motif; sequence GKKRKRPHVFESNPSIRKRQQTRLLRKLR. The DNA-binding element occupies 109–305; the sequence is TRLLRKLRAT…SIAHLVPSQT (197 aa). Residue K139 forms a Glycyl lysine isopeptide (Lys-Gly) (interchain with G-Cter in SUMO2) linkage. The segment at 301–476 is required for transcriptional activation; the sequence is VPSQTVVQTF…AQGNGPVQVA (176 aa).

The protein belongs to the NRF1/Ewg family. As to quaternary structure, homodimer. Binds DNA as a dimer. Interacts with PPRC1. Post-translationally, phosphorylation enhances DNA binding. Ubiquitously expressed with strongest expression in skeletal muscle.

The protein localises to the nucleus. In terms of biological role, transcription factor that activates the expression of the EIF2S1 (EIF2-alpha) gene. Links the transcriptional modulation of key metabolic genes to cellular growth and development. Implicated in the control of nuclear genes required for respiration, heme biosynthesis, and mitochondrial DNA transcription and replication. The polypeptide is Nuclear respiratory factor 1 (NRF1) (Homo sapiens (Human)).